Consider the following 256-residue polypeptide: Type III pantothenate kinase (256 aa).

6-13 contacts ATP; that stretch reads DVGNSNIV. Substrate contacts are provided by residues tyrosine 100 and 107–110; that span reads GADR. The active-site Proton acceptor is the aspartate 109. A K(+)-binding site is contributed by aspartate 129. Threonine 132 serves as a coordination point for ATP. Threonine 184 serves as a coordination point for substrate.

Belongs to the type III pantothenate kinase family. Homodimer. The cofactor is NH4(+). K(+) serves as cofactor.

The protein resides in the cytoplasm. The enzyme catalyses (R)-pantothenate + ATP = (R)-4'-phosphopantothenate + ADP + H(+). The protein operates within cofactor biosynthesis; coenzyme A biosynthesis; CoA from (R)-pantothenate: step 1/5. Its function is as follows. Catalyzes the phosphorylation of pantothenate (Pan), the first step in CoA biosynthesis. The sequence is that of Type III pantothenate kinase from Geotalea daltonii (strain DSM 22248 / JCM 15807 / FRC-32) (Geobacter daltonii).